A 62-amino-acid polypeptide reads, in one-letter code: uncharacterized protein (62 aa).

Residues Ile-17–Ile-37 form a helical membrane-spanning segment.

It localises to the membrane. This is an uncharacterized protein from Helicobacter pylori (strain J99 / ATCC 700824) (Campylobacter pylori J99).